A 205-amino-acid chain; its full sequence is Thymidylate kinase (205 aa).

Residue 7–14 participates in ATP binding; that stretch reads GIDGSGKT.

The protein belongs to the thymidylate kinase family.

The catalysed reaction is dTMP + ATP = dTDP + ADP. Its function is as follows. Phosphorylation of dTMP to form dTDP in both de novo and salvage pathways of dTTP synthesis. This Wolbachia pipientis subsp. Culex pipiens (strain wPip) protein is Thymidylate kinase.